A 357-amino-acid chain; its full sequence is Nicotinate-nucleotide--dimethylbenzimidazole phosphoribosyltransferase (357 aa).

The active-site Proton acceptor is glutamate 323.

It belongs to the CobT family.

The enzyme catalyses 5,6-dimethylbenzimidazole + nicotinate beta-D-ribonucleotide = alpha-ribazole 5'-phosphate + nicotinate + H(+). The protein operates within nucleoside biosynthesis; alpha-ribazole biosynthesis; alpha-ribazole from 5,6-dimethylbenzimidazole: step 1/2. Catalyzes the synthesis of alpha-ribazole-5'-phosphate from nicotinate mononucleotide (NAMN) and 5,6-dimethylbenzimidazole (DMB). The chain is Nicotinate-nucleotide--dimethylbenzimidazole phosphoribosyltransferase from Nitratidesulfovibrio vulgaris (strain DP4) (Desulfovibrio vulgaris).